Here is a 518-residue protein sequence, read N- to C-terminus: Tropomyosin-1, isoforms 33/34 (518 aa).

A coiled-coil region spans residues 14–267; the sequence is DKDGALERAL…DDLIVEKERY (254 aa). 2 disordered regions span residues 101–125 and 288–518; these read RSEERLGSATAKLSEASQAADESER and FWNP…APPA. Over residues 293–305 the composition is skewed to pro residues; the sequence is NPKPPTPKLPTPT. Residues 318-348 show a composition bias toward low complexity; it reads AAEAAAAAEAEAAEAAAAAGEAGPDGAPAAP. 2 stretches are compositionally biased toward pro residues: residues 357–374 and 394–405; these read EPTPPKEPTPPPPPPPPF and EPPPPGSEPEPV. Low complexity predominate over residues 406–518; that stretch reads PAAEGEAAPA…AAAEGEAPPA (113 aa).

It belongs to the tropomyosin family. In terms of assembly, homodimer. In terms of tissue distribution, both isoforms are only expressed in indirect flight muscles.

The protein localises to the cytoplasm. It is found in the cytoskeleton. In terms of biological role, tropomyosin, in association with the troponin complex, plays a central role in the calcium dependent regulation of muscle contraction. This is Tropomyosin-1, isoforms 33/34 (Tm1) from Drosophila melanogaster (Fruit fly).